We begin with the raw amino-acid sequence, 160 residues long: Cytochrome b6-f complex subunit 4 (160 aa).

3 helical membrane-spanning segments follow: residues 36–56 (LLYV…ALAV), 95–115 (LLGV…PFIE), and 131–151 (TVFL…ALPL).

Belongs to the cytochrome b family. PetD subfamily. In terms of assembly, the 4 large subunits of the cytochrome b6-f complex are cytochrome b6, subunit IV (17 kDa polypeptide, PetD), cytochrome f and the Rieske protein, while the 4 small subunits are PetG, PetL, PetM and PetN. The complex functions as a dimer.

The protein localises to the cellular thylakoid membrane. Component of the cytochrome b6-f complex, which mediates electron transfer between photosystem II (PSII) and photosystem I (PSI), cyclic electron flow around PSI, and state transitions. The polypeptide is Cytochrome b6-f complex subunit 4 (Trichormus variabilis (strain ATCC 29413 / PCC 7937) (Anabaena variabilis)).